Consider the following 508-residue polypeptide: Serine carboxypeptidase 3 (508 aa).

Positions 1 to 19 are cleaved as a signal peptide; it reads MVTTPRLVSLLLLLALCAA. Residues 20–80 constitute a propeptide that is removed on maturation; the sequence is AAGALRLPPD…PGQLLERRVT (61 aa). The interval 48-67 is disordered; it reads PKDSSSSSGRHGARVGEGNE. Leu81 carries the post-translational modification Blocked amino end (Leu). 3 cysteine pairs are disulfide-bonded: Cys133/Cys373, Cys301/Cys316, and Cys339/Cys344. Asn151 is a glycosylation site (N-linked (GlcNAc...) asparagine). Ser223 is an active-site residue. The active site involves Asp411. Cys414 is a substrate binding site. His468 is a catalytic residue. A propeptide spanning residues 492 to 508 is cleaved from the precursor; it reads EAVPEEESSTTSFYAAM.

This sequence belongs to the peptidase S10 family. In terms of assembly, monomer.

Its subcellular location is the secreted. The catalysed reaction is Release of a C-terminal amino acid with broad specificity.. Its activity is regulated as follows. Inhibited by mercuric ions. In Hordeum vulgare (Barley), this protein is Serine carboxypeptidase 3 (CBP3).